The following is a 316-amino-acid chain: Coiled-coil domain-containing protein 130 homolog (316 aa).

Positions 182-203 form a coiled coil; sequence ANSRLRAEFRQQKKEINGQQEL. A disordered region spans residues 287-316; sequence KLEETTSSATNEKPISLVGDYSSSDNDSNG.

Belongs to the CWC16 family.

The chain is Coiled-coil domain-containing protein 130 homolog from Drosophila melanogaster (Fruit fly).